The primary structure comprises 159 residues: Phosphopantetheine adenylyltransferase (159 aa).

Residue Thr-10 participates in substrate binding. ATP-binding positions include 10–11 and His-18; that span reads TF. Substrate-binding residues include Lys-42, Met-74, and Arg-88. Residues 89 to 91, Glu-99, and 124 to 130 contribute to the ATP site; these read GLR and WSFISSS.

It belongs to the bacterial CoaD family. In terms of assembly, homohexamer. Mg(2+) serves as cofactor.

Its subcellular location is the cytoplasm. The catalysed reaction is (R)-4'-phosphopantetheine + ATP + H(+) = 3'-dephospho-CoA + diphosphate. It functions in the pathway cofactor biosynthesis; coenzyme A biosynthesis; CoA from (R)-pantothenate: step 4/5. In terms of biological role, reversibly transfers an adenylyl group from ATP to 4'-phosphopantetheine, yielding dephospho-CoA (dPCoA) and pyrophosphate. In Citrobacter koseri (strain ATCC BAA-895 / CDC 4225-83 / SGSC4696), this protein is Phosphopantetheine adenylyltransferase.